The following is a 591-amino-acid chain: Phosphoglucan phosphatase LSF1, chloroplastic (591 aa).

The N-terminal 61 residues, Met-1–Val-61, are a transit peptide targeting the chloroplast. A Tyrosine-protein phosphatase domain is found at Arg-291–Pro-453. Cys-390 functions as the Phosphocysteine intermediate in the catalytic mechanism. Residue Cys-390–Arg-396 coordinates substrate.

It localises to the plastid. The protein localises to the chloroplast. In terms of biological role, starch granule-associated phosphoglucan phosphatase involved in the control of starch accumulation. Participates in the regulation of the initial steps of starch degradation at the granule surface. May release a different set of phosphate groups from those removed by DSP4. This is Phosphoglucan phosphatase LSF1, chloroplastic (LSF1) from Arabidopsis thaliana (Mouse-ear cress).